The sequence spans 126 residues: Protein ApaG (126 aa).

One can recognise an ApaG domain in the interval 2–126 (SQLTSSVRVD…FRLSIPGLLH (125 aa)).

The sequence is that of Protein ApaG from Shewanella halifaxensis (strain HAW-EB4).